Here is a 287-residue protein sequence, read N- to C-terminus: Protoheme IX farnesyltransferase (287 aa).

A run of 7 helical transmembrane segments spans residues 19–39, 100–120, 134–154, 162–182, 212–232, 233–253, and 267–287; these read LMVA…VTIT, MVLC…IVAV, FALL…WLAV, MLVV…WLHA, VWFH…LLEW, VGMR…AMLA, and VLCA…VSLF.

This sequence belongs to the UbiA prenyltransferase family. Protoheme IX farnesyltransferase subfamily.

The protein localises to the cell inner membrane. It carries out the reaction heme b + (2E,6E)-farnesyl diphosphate + H2O = Fe(II)-heme o + diphosphate. It functions in the pathway porphyrin-containing compound metabolism; heme O biosynthesis; heme O from protoheme: step 1/1. Its function is as follows. Converts heme B (protoheme IX) to heme O by substitution of the vinyl group on carbon 2 of heme B porphyrin ring with a hydroxyethyl farnesyl side group. This chain is Protoheme IX farnesyltransferase, found in Nitratidesulfovibrio vulgaris (strain ATCC 29579 / DSM 644 / CCUG 34227 / NCIMB 8303 / VKM B-1760 / Hildenborough) (Desulfovibrio vulgaris).